A 218-amino-acid chain; its full sequence is N-(5'-phosphoribosyl)anthranilate isomerase (218 aa).

Belongs to the TrpF family.

It catalyses the reaction N-(5-phospho-beta-D-ribosyl)anthranilate = 1-(2-carboxyphenylamino)-1-deoxy-D-ribulose 5-phosphate. The protein operates within amino-acid biosynthesis; L-tryptophan biosynthesis; L-tryptophan from chorismate: step 3/5. This is N-(5'-phosphoribosyl)anthranilate isomerase from Bacillus licheniformis (strain ATCC 14580 / DSM 13 / JCM 2505 / CCUG 7422 / NBRC 12200 / NCIMB 9375 / NCTC 10341 / NRRL NRS-1264 / Gibson 46).